We begin with the raw amino-acid sequence, 396 residues long: Putative isochorismate synthase (396 aa).

Belongs to the isochorismate synthase family.

It carries out the reaction chorismate = isochorismate. The protein operates within siderophore biosynthesis; amonabactin biosynthesis. Involved in the synthesis of amonabactin, a phenolate siderophore containing 2,3-dihydroxybenzoic acid (2,3-DHB). This Aeromonas hydrophila protein is Putative isochorismate synthase (amoA).